A 364-amino-acid polypeptide reads, in one-letter code: S-adenosylmethionine:tRNA ribosyltransferase-isomerase (364 aa).

Residues 344–364 (ASDKMQETSGRGERPRFDHEI) form a disordered region.

Belongs to the QueA family. In terms of assembly, monomer.

The protein localises to the cytoplasm. It catalyses the reaction 7-aminomethyl-7-carbaguanosine(34) in tRNA + S-adenosyl-L-methionine = epoxyqueuosine(34) in tRNA + adenine + L-methionine + 2 H(+). Its pathway is tRNA modification; tRNA-queuosine biosynthesis. Its function is as follows. Transfers and isomerizes the ribose moiety from AdoMet to the 7-aminomethyl group of 7-deazaguanine (preQ1-tRNA) to give epoxyqueuosine (oQ-tRNA). The polypeptide is S-adenosylmethionine:tRNA ribosyltransferase-isomerase (Thioalkalivibrio sulfidiphilus (strain HL-EbGR7)).